A 295-amino-acid chain; its full sequence is Protease HtpX (295 aa).

The next 2 membrane-spanning stretches (helical) occupy residues 4-24 (IVLF…ILSL) and 34-54 (GLMI…LLMS). His-139 is a Zn(2+) binding site. Glu-140 is a catalytic residue. Zn(2+) is bound at residue His-143. Helical transmembrane passes span 147-167 (GDMV…IFIS) and 194-214 (IVYM…ASII). A Zn(2+)-binding site is contributed by Glu-223.

This sequence belongs to the peptidase M48B family. Zn(2+) is required as a cofactor.

The protein localises to the cell inner membrane. The protein is Protease HtpX of Photorhabdus laumondii subsp. laumondii (strain DSM 15139 / CIP 105565 / TT01) (Photorhabdus luminescens subsp. laumondii).